We begin with the raw amino-acid sequence, 183 residues long: Holliday junction branch migration complex subunit RuvA (183 aa).

The domain I stretch occupies residues 1–63 (MIVGLIGVVE…EDAHLLYGFL (63 aa)). The segment at 64–139 (EEGEKILFER…FFIQDENRPA (76 aa)) is domain II. Ala-139 is a region of interest (flexible linker). Positions 139–183 (ARNEVFLALESLGFKSAEINQVLKTLKPNLSIEAAIKEALQQLRS) are domain III.

This sequence belongs to the RuvA family. In terms of assembly, homotetramer. Forms an RuvA(8)-RuvB(12)-Holliday junction (HJ) complex. HJ DNA is sandwiched between 2 RuvA tetramers; dsDNA enters through RuvA and exits via RuvB. An RuvB hexamer assembles on each DNA strand where it exits the tetramer. Each RuvB hexamer is contacted by two RuvA subunits (via domain III) on 2 adjacent RuvB subunits; this complex drives branch migration. In the full resolvosome a probable DNA-RuvA(4)-RuvB(12)-RuvC(2) complex forms which resolves the HJ.

It localises to the cytoplasm. The RuvA-RuvB-RuvC complex processes Holliday junction (HJ) DNA during genetic recombination and DNA repair, while the RuvA-RuvB complex plays an important role in the rescue of blocked DNA replication forks via replication fork reversal (RFR). RuvA specifically binds to HJ cruciform DNA, conferring on it an open structure. The RuvB hexamer acts as an ATP-dependent pump, pulling dsDNA into and through the RuvAB complex. HJ branch migration allows RuvC to scan DNA until it finds its consensus sequence, where it cleaves and resolves the cruciform DNA. This chain is Holliday junction branch migration complex subunit RuvA, found in Helicobacter pylori (strain ATCC 700392 / 26695) (Campylobacter pylori).